The following is a 71-amino-acid chain: Protein translocase subunit SecE (71 aa).

The helical transmembrane segment at 43 to 63 (VAGVGILAVGAIGFIIYVLLT) threads the bilayer.

This sequence belongs to the SecE/SEC61-gamma family. Component of the Sec protein translocase complex. Heterotrimer consisting of SecY (alpha), SecG (beta) and SecE (gamma) subunits. The heterotrimers can form oligomers, although 1 heterotrimer is thought to be able to translocate proteins. Interacts with the ribosome. May interact with SecDF, and other proteins may be involved.

The protein resides in the cell membrane. Essential subunit of the Sec protein translocation channel SecYEG. Clamps together the 2 halves of SecY. May contact the channel plug during translocation. This Methanosarcina barkeri (strain Fusaro / DSM 804) protein is Protein translocase subunit SecE.